The primary structure comprises 630 residues: Golgin subfamily A member 8K (630 aa).

Positions 1–76 (MAEETQHNKL…TSSATLKDLE (76 aa)) are disordered. Coiled-coil stretches lie at residues 86 to 148 (LDSR…LNTD) and 224 to 411 (LTQL…QQNQ). Residues 352 to 362 (KQEERIQEQHK) are compositionally biased toward basic and acidic residues. Disordered stretches follow at residues 352 to 379 (KQEE…EPNN) and 424 to 444 (GEGH…PMPS).

It belongs to the GOLGA8 family.

The protein is Golgin subfamily A member 8K of Homo sapiens (Human).